Consider the following 179-residue polypeptide: Inosine/xanthosine triphosphatase (179 aa).

Glutamate 71 is a binding site for Mg(2+). A substrate-binding site is contributed by glutamate 71–alanine 72.

This sequence belongs to the YjjX NTPase family. In terms of assembly, homodimer. The cofactor is Mg(2+). Requires Mn(2+) as cofactor.

The enzyme catalyses XTP + H2O = XDP + phosphate + H(+). It carries out the reaction ITP + H2O = IDP + phosphate + H(+). Its function is as follows. Phosphatase that hydrolyzes non-canonical purine nucleotides such as XTP and ITP to their respective diphosphate derivatives. Probably excludes non-canonical purines from DNA/RNA precursor pool, thus preventing their incorporation into DNA/RNA and avoiding chromosomal lesions. This Shewanella sp. (strain MR-7) protein is Inosine/xanthosine triphosphatase.